We begin with the raw amino-acid sequence, 61 residues long: Small ribosomal subunit protein uS14 (61 aa).

A compositionally biased stretch (basic residues) spans 1 to 14; that stretch reads MAKTSQKVRNHRPA. The segment at 1–20 is disordered; the sequence is MAKTSQKVRNHRPAKFSSRE. 4 residues coordinate Zn(2+): Cys-24, Cys-27, Cys-40, and Cys-43.

It belongs to the universal ribosomal protein uS14 family. Zinc-binding uS14 subfamily. As to quaternary structure, part of the 30S ribosomal subunit. Contacts proteins S3 and S10. Requires Zn(2+) as cofactor.

Its function is as follows. Binds 16S rRNA, required for the assembly of 30S particles and may also be responsible for determining the conformation of the 16S rRNA at the A site. This Lactobacillus delbrueckii subsp. bulgaricus (strain ATCC 11842 / DSM 20081 / BCRC 10696 / JCM 1002 / NBRC 13953 / NCIMB 11778 / NCTC 12712 / WDCM 00102 / Lb 14) protein is Small ribosomal subunit protein uS14.